The following is a 391-amino-acid chain: 2,4,6-trihydroxybenzophenone synthase (391 aa).

Cysteine 165 is an active-site residue.

This sequence belongs to the thiolase-like superfamily. Chalcone/stilbene synthases family. Homodimer. Expressed in young fruit pericarp.

The catalysed reaction is benzoyl-CoA + 3 malonyl-CoA + 2 H(+) = 2,4,6-trihydroxybenzophenone + 3 CO2 + 4 CoA. Type III polyketide synthase involved in the biosynthesis of benzophenones and xanthones. Produces mainly 2,4,6-trihydroxybenzophenone together with minor amounts of tetraketide lactone, triketide lactone and diketide lactone. The preferred substrate is benzoyl-CoA, but can also use acetyl-CoA, phenylacetyl-CoA, hexanoyl-CoA, cinnamoyl-CoA, p-coumaroyl-CoA and salicoyl-CoA. This chain is 2,4,6-trihydroxybenzophenone synthase (BPS), found in Garcinia mangostana (Mangosteen).